Consider the following 465-residue polypeptide: ATP synthase subunit beta (465 aa).

An ATP-binding site is contributed by 149-156; it reads GGAGVGKT.

Belongs to the ATPase alpha/beta chains family. F-type ATPases have 2 components, CF(1) - the catalytic core - and CF(0) - the membrane proton channel. CF(1) has five subunits: alpha(3), beta(3), gamma(1), delta(1), epsilon(1). CF(0) has three main subunits: a(1), b(2) and c(9-12). The alpha and beta chains form an alternating ring which encloses part of the gamma chain. CF(1) is attached to CF(0) by a central stalk formed by the gamma and epsilon chains, while a peripheral stalk is formed by the delta and b chains.

It localises to the cell inner membrane. It carries out the reaction ATP + H2O + 4 H(+)(in) = ADP + phosphate + 5 H(+)(out). Produces ATP from ADP in the presence of a proton gradient across the membrane. The catalytic sites are hosted primarily by the beta subunits. This Dictyoglomus turgidum (strain DSM 6724 / Z-1310) protein is ATP synthase subunit beta.